The primary structure comprises 718 residues: Peroxisomal bifunctional enzyme (718 aa).

The enoyl-CoA hydratase / isomerase stretch occupies residues 1-280 (MAEYLRLPHS…FAEKSANKWS (280 aa)). N6-succinyllysine is present on lysine 38. Glycine 99 contributes to the substrate binding site. N6-acetyllysine; alternate occurs at positions 163 and 172. Lysine 163 and lysine 172 each carry N6-succinyllysine; alternate. The residue at position 181 (lysine 181) is an N6-succinyllysine. N6-acetyllysine; alternate occurs at positions 189 and 217. An N6-succinyllysine; alternate mark is found at lysine 189 and lysine 217. Lysine 240 is modified (N6-succinyllysine). An N6-acetyllysine modification is found at lysine 248. Lysine 252 carries the N6-succinyllysine modification. Lysine 274 carries the post-translational modification N6-acetyllysine; alternate. Residue lysine 274 is modified to N6-succinyllysine; alternate. N6-succinyllysine is present on residues lysine 278, lysine 288, and lysine 329. The 3-hydroxyacyl-CoA dehydrogenase stretch occupies residues 281 to 567 (TPSGASWKTA…DMLCEAGRFG (287 aa)). 4 positions are modified to N6-acetyllysine: lysine 344, lysine 348, lysine 355, and lysine 459. Lysine 527 carries the N6-succinyllysine modification. Threonine 543 is modified (phosphothreonine). N6-succinyllysine is present on lysine 572. An N6-acetyllysine; alternate mark is found at lysine 579, lysine 586, and lysine 705. An N6-succinyllysine; alternate mark is found at lysine 579, lysine 586, and lysine 705. The Microbody targeting signal signature appears at 716 to 718 (SKL). The residue at position 717 (lysine 717) is an N6-succinyllysine.

In the N-terminal section; belongs to the enoyl-CoA hydratase/isomerase family. The protein in the C-terminal section; belongs to the 3-hydroxyacyl-CoA dehydrogenase family. In terms of assembly, monomer. Post-translationally, acetylated, leading to enhanced enzyme activity. Acetylation is enhanced by up to 80% after treatment either with trichostin A (TCA) or with nicotinamide (NAM) with highest increase on Lys-344. Acetylation and enzyme activity increased by about 1.5% on addition of fatty acids.

The protein resides in the peroxisome. It carries out the reaction a (3S)-3-hydroxyacyl-CoA = a (2E)-enoyl-CoA + H2O. It catalyses the reaction a 4-saturated-(3S)-3-hydroxyacyl-CoA = a (3E)-enoyl-CoA + H2O. The enzyme catalyses a (3Z)-enoyl-CoA = a 4-saturated (2E)-enoyl-CoA. The catalysed reaction is a (3E)-enoyl-CoA = a 4-saturated (2E)-enoyl-CoA. It carries out the reaction a (3S)-3-hydroxyacyl-CoA + NAD(+) = a 3-oxoacyl-CoA + NADH + H(+). It catalyses the reaction (2S,3S)-3-hydroxy-2-methylbutanoyl-CoA = (2E)-2-methylbut-2-enoyl-CoA + H2O. The enzyme catalyses (2E)-dodecenedioyl-CoA + H2O = (3S)-hydroxydodecanedioyl-CoA. The catalysed reaction is (3S)-hydroxydodecanedioyl-CoA + NAD(+) = 3-oxododecanedioyl-CoA + NADH + H(+). It carries out the reaction (2E)-octenedioyl-CoA + H2O = (3S)-hydroxyoctanedioyl-CoA. It catalyses the reaction (3S)-hydroxyoctanedioyl-CoA + NAD(+) = 3-oxooctanedioyl-CoA + NADH + H(+). The enzyme catalyses (2E)-decenedioyl-CoA + H2O = (3S)-hydroxydecanedioyl-CoA. The catalysed reaction is (3S)-hydroxydecanedioyl-CoA + NAD(+) = 3-oxodecanedioyl-CoA + NADH + H(+). It carries out the reaction (2E)-tetradecenedioyl-CoA + H2O = (3S)-hydroxytetradecanedioyl-CoA. It catalyses the reaction (3S)-hydroxytetradecanedioyl-CoA + NAD(+) = 3-oxotetradecanedioyl-CoA + NADH + H(+). The enzyme catalyses (3E,5Z)-tetradecadienoyl-CoA = (2E,5Z)-tetradecadienoyl-CoA. The catalysed reaction is (3E,5Z)-octadienoyl-CoA = (2E,5Z)-octadienoyl-CoA. It carries out the reaction (3S)-hydroxydecanoyl-CoA + NAD(+) = 3-oxodecanoyl-CoA + NADH + H(+). It catalyses the reaction (3E)-decenoyl-CoA = (2E)-decenoyl-CoA. The enzyme catalyses (3Z)-hexenoyl-CoA = (2E)-hexenoyl-CoA. The catalysed reaction is (3E)-hexenoyl-CoA = (2E)-hexenoyl-CoA. It carries out the reaction (3S)-hydroxydecanoyl-CoA = (2E)-decenoyl-CoA + H2O. It catalyses the reaction (3S)-hydroxyhexanoyl-CoA = (2E)-hexenoyl-CoA + H2O. The enzyme catalyses (3S)-hydroxyhexadecanoyl-CoA + NAD(+) = 3-oxohexadecanoyl-CoA + NADH + H(+). The catalysed reaction is (3S)-hydroxyhexadecanoyl-CoA = (2E)-hexadecenoyl-CoA + H2O. It carries out the reaction (2E)-hexadecenedioyl-CoA + H2O = (3S)-hydroxyhexadecanedioyl-CoA. It catalyses the reaction (3S)-hydroxyhexadecanedioyl-CoA + NAD(+) = 3-oxohexadecanedioyl-CoA + NADH + H(+). Its pathway is lipid metabolism; fatty acid beta-oxidation. Enzyme activity enhanced by acetylation. Peroxisomal trifunctional enzyme possessing 2-enoyl-CoA hydratase, 3-hydroxyacyl-CoA dehydrogenase, and delta 3, delta 2-enoyl-CoA isomerase activities. Catalyzes two of the four reactions of the long chain fatty acids peroxisomal beta-oxidation pathway. Can also use branched-chain fatty acids such as 2-methyl-2E-butenoyl-CoA as a substrate, which is hydrated into (2S,3S)-3-hydroxy-2-methylbutanoyl-CoA. Optimal isomerase for 2,5 double bonds into 3,5 form isomerization in a range of enoyl-CoA species. Also able to isomerize both 3-cis and 3-trans double bonds into the 2-trans form in a range of enoyl-CoA species. With HSD17B4, catalyzes the hydration of trans-2-enoyl-CoA and the dehydrogenation of 3-hydroxyacyl-CoA, but with opposite chiral specificity. Regulates the amount of medium-chain dicarboxylic fatty acids which are essential regulators of all fatty acid oxidation pathways. Also involved in the degradation of long-chain dicarboxylic acids through peroxisomal beta-oxidation. The protein is Peroxisomal bifunctional enzyme of Mus musculus (Mouse).